Reading from the N-terminus, the 517-residue chain is GMP synthase [glutamine-hydrolyzing] (517 aa).

Positions Lys-11 to Asn-202 constitute a Glutamine amidotransferase type-1 domain. Cys-88 (nucleophile) is an active-site residue. Residues His-176 and Glu-178 contribute to the active site. The GMPS ATP-PPase domain occupies Trp-203–Arg-392. Ser-230–Ser-236 is an ATP binding site.

Homodimer.

It catalyses the reaction XMP + L-glutamine + ATP + H2O = GMP + L-glutamate + AMP + diphosphate + 2 H(+). It participates in purine metabolism; GMP biosynthesis; GMP from XMP (L-Gln route): step 1/1. In terms of biological role, catalyzes the synthesis of GMP from XMP. The polypeptide is GMP synthase [glutamine-hydrolyzing] (Lactobacillus delbrueckii subsp. bulgaricus (strain ATCC 11842 / DSM 20081 / BCRC 10696 / JCM 1002 / NBRC 13953 / NCIMB 11778 / NCTC 12712 / WDCM 00102 / Lb 14)).